Consider the following 219-residue polypeptide: Lipid transferase CIDEB (219 aa).

The 78-residue stretch at 33-110 (PRQRPFRVCD…VLELGQSWSP (78 aa)) folds into the CIDE-N domain.

This sequence belongs to the CIDE family. As to quaternary structure, interacts with DFFA. Interacts with DFFB; inhibited by DFFB. Interacts with APOB. Interacts with PREB/SEC12; facilitating loading of SCAP-SREBP into COPII vesicles.

It localises to the lipid droplet. The protein localises to the endoplasmic reticulum membrane. It is found in the golgi apparatus. The protein resides in the cytoplasmic vesicle. Its subcellular location is the COPI-coated vesicle. Lipid transferase specifically expressed in hepatocytes, which promotes unilocular lipid droplet formation by mediating lipid droplet fusion. Lipid droplet fusion promotes their enlargement, restricting lipolysis and favoring lipid storage. Localizes on the lipid droplet surface, at focal contact sites between lipid droplets, and mediates atypical lipid droplet fusion by promoting directional net neutral lipid transfer from the smaller to larger lipid droplets. The transfer direction may be driven by the internal pressure difference between the contacting lipid droplet pair. Promotes lipid exchange and lipid droplet fusion in both small and large lipid droplet-containing hepatocytes. In addition to its role in lipid droplet fusion, also involved in cytoplasmic vesicle biogenesis and transport. Required for very-low-density lipoprotein (VLDL) lipidation and maturation. Probably involved in the biogenesis of VLDL transport vesicles by forming a COPII vesicle coat and facilitating the formation of endoplasmic reticulum-derived large vesicles. Also involved in sterol-regulated export of the SCAP-SREBP complex, composed of SCAP, SREBF1/SREBP1 and SREBF2/SREBP2, by promoting loading of SCAP-SREBP into COPII vesicles. May also activate apoptosis. The polypeptide is Lipid transferase CIDEB (CIDEB) (Bos taurus (Bovine)).